The following is a 265-amino-acid chain: Phosphatidylglycerol--prolipoprotein diacylglyceryl transferase (265 aa).

7 helical membrane passes run 17-37, 59-79, 94-114, 123-143, 177-197, 204-224, and 238-258; these read LAIRWYGLMYLAAFAQFIWLA, MLFYGVLGVIIGGRLGEVLFY, VWKGGMSFHGGFLGVLLAMSI, VLDVWDFIAPMVPLGYAFGRL, SPLYQALVDGLLMFILLWLFA, MAVGGMFALLYGSARFFTEYF, and ISAGQMLSVPLIVLGIVMLLI. Residue R142 participates in a 1,2-diacyl-sn-glycero-3-phospho-(1'-sn-glycerol) binding.

This sequence belongs to the Lgt family.

Its subcellular location is the cell inner membrane. The enzyme catalyses L-cysteinyl-[prolipoprotein] + a 1,2-diacyl-sn-glycero-3-phospho-(1'-sn-glycerol) = an S-1,2-diacyl-sn-glyceryl-L-cysteinyl-[prolipoprotein] + sn-glycerol 1-phosphate + H(+). It functions in the pathway protein modification; lipoprotein biosynthesis (diacylglyceryl transfer). Functionally, catalyzes the transfer of the diacylglyceryl group from phosphatidylglycerol to the sulfhydryl group of the N-terminal cysteine of a prolipoprotein, the first step in the formation of mature lipoproteins. The polypeptide is Phosphatidylglycerol--prolipoprotein diacylglyceryl transferase (Janthinobacterium sp. (strain Marseille) (Minibacterium massiliensis)).